Here is a 551-residue protein sequence, read N- to C-terminus: Arylsulfatase (551 aa).

An N-terminal signal peptide occupies residues 1–20; it reads MKSAPFLFLLGLLGLVTAQT. At glutamine 21 the chain carries Blocked amino end (Gln). The Ca(2+) site is built by aspartate 60, histidine 61, and cysteine 100. Residue cysteine 100 is the Nucleophile of the active site. At cysteine 100 the chain carries 3-oxoalanine (Cys). Residue histidine 158 is part of the active site. N-linked (GlcNAc...) asparagine glycans are attached at residues asparagine 164, asparagine 213, and asparagine 296. Aspartate 308 and histidine 309 together coordinate Ca(2+).

The protein belongs to the sulfatase family. Requires Ca(2+) as cofactor. The conversion to 3-oxoalanine (also known as C-formylglycine, FGly), of a serine or cysteine residue in prokaryotes and of a cysteine residue in eukaryotes, is critical for catalytic activity.

It localises to the cytoplasm. Its subcellular location is the secreted. It is found in the extracellular space. The protein resides in the extracellular matrix. The enzyme catalyses an aryl sulfate + H2O = a phenol + sulfate + H(+). Functionally, may be a structural component of the extracellular matrices involved in cell movement during morphogenesis. The protein is Arylsulfatase of Hemicentrotus pulcherrimus (Sea urchin).